Reading from the N-terminus, the 360-residue chain is MVATLERREEKRDWGTFATWITSTENRLYIGWFGCLMIPTLLTAASCYIIAFIAAPPVDIDGIREPVAGSLLYGNNIISGAVIPSSNAIGIHFYPIWEAASIEEWLYNGGPYQLIVFHFLIGVACWMGREWELSYRLGMRPWIFVAFSAPVAAASAVFLVYPIGQGSFSDGMPLGISGTFNFMIVFQAEHNILMRPFHMAGVAGVFGGSLFSAMHGSLVTSSLIRETSEVESVNYGYKFGQEEETYNIVAAHGYFGRLIFQYASFNNSRALHFFLAAWPVVGIWLTALGVSTMAFNLNGFNFNQSVVDSEGRVINTWADIINRADLGMEVMHERNAHNFPLDLASNEILPVAISAPSVVG.

Helical transmembrane passes span 29–46 (YIGW…TAAS), 118–133 (HFLI…EWEL), and 142–156 (WIFV…AASA). His-118 contributes to the chlorophyll a binding site. Trp-126 contributes to the pheophytin a binding site. Positions 170 and 189 each coordinate [CaMn4O5] cluster. Residues 197–218 (FHMAGVAGVFGGSLFSAMHGSL) traverse the membrane as a helical segment. Residue His-198 participates in chlorophyll a binding. A quinone is bound by residues His-215 and 264–265 (SF). His-215 is a Fe cation binding site. His-272 provides a ligand contact to Fe cation. Residues 274–288 (FLAAWPVVGIWLTAL) form a helical membrane-spanning segment. [CaMn4O5] cluster is bound by residues His-332, Glu-333, Asp-342, and Ala-344. The propeptide occupies 345–360 (SNEILPVAISAPSVVG).

This sequence belongs to the reaction center PufL/M/PsbA/D family. As to quaternary structure, PSII is composed of 1 copy each of membrane proteins PsbA, PsbB, PsbC, PsbD, PsbE, PsbF, PsbH, PsbI, PsbJ, PsbK, PsbL, PsbM, PsbT, PsbX, PsbY, PsbZ, Psb30/Ycf12, at least 3 peripheral proteins of the oxygen-evolving complex and a large number of cofactors. It forms dimeric complexes. It depends on The D1/D2 heterodimer binds P680, chlorophylls that are the primary electron donor of PSII, and subsequent electron acceptors. It shares a non-heme iron and each subunit binds pheophytin, quinone, additional chlorophylls, carotenoids and lipids. D1 provides most of the ligands for the Mn4-Ca-O5 cluster of the oxygen-evolving complex (OEC). There is also a Cl(-1) ion associated with D1 and D2, which is required for oxygen evolution. The PSII complex binds additional chlorophylls, carotenoids and specific lipids. as a cofactor. Tyr-161 forms a radical intermediate that is referred to as redox-active TyrZ, YZ or Y-Z. In terms of processing, C-terminally processed by CTPA; processing is essential to allow assembly of the oxygen-evolving complex and thus photosynthetic growth.

Its subcellular location is the plastid. The protein resides in the chloroplast thylakoid membrane. It catalyses the reaction 2 a plastoquinone + 4 hnu + 2 H2O = 2 a plastoquinol + O2. Its function is as follows. Photosystem II (PSII) is a light-driven water:plastoquinone oxidoreductase that uses light energy to abstract electrons from H(2)O, generating O(2) and a proton gradient subsequently used for ATP formation. It consists of a core antenna complex that captures photons, and an electron transfer chain that converts photonic excitation into a charge separation. The D1/D2 (PsbA/PsbD) reaction center heterodimer binds P680, the primary electron donor of PSII as well as several subsequent electron acceptors. This is Photosystem II protein D1 from Ectocarpus siliculosus (Brown alga).